We begin with the raw amino-acid sequence, 163 residues long: Nucleotide-binding protein SACE_6882 (163 aa).

Belongs to the YajQ family.

Functionally, nucleotide-binding protein. In Saccharopolyspora erythraea (strain ATCC 11635 / DSM 40517 / JCM 4748 / NBRC 13426 / NCIMB 8594 / NRRL 2338), this protein is Nucleotide-binding protein SACE_6882.